The chain runs to 371 residues: Aspartate-semialdehyde dehydrogenase (371 aa).

NADP(+)-binding positions include 11-14 (RGMV), 38-39 (TS), and glutamine 75. Arginine 104 provides a ligand contact to phosphate. The active-site Acyl-thioester intermediate is cysteine 137. Residue glutamine 164 coordinates substrate. 167–168 (SG) contacts NADP(+). A substrate-binding site is contributed by glutamate 243. A phosphate-binding site is contributed by lysine 246. Arginine 269 lines the substrate pocket. The active-site Proton acceptor is the histidine 276. Residue glutamine 352 coordinates NADP(+).

It belongs to the aspartate-semialdehyde dehydrogenase family. In terms of assembly, homodimer.

The enzyme catalyses L-aspartate 4-semialdehyde + phosphate + NADP(+) = 4-phospho-L-aspartate + NADPH + H(+). It participates in amino-acid biosynthesis; L-lysine biosynthesis via DAP pathway; (S)-tetrahydrodipicolinate from L-aspartate: step 2/4. Its pathway is amino-acid biosynthesis; L-methionine biosynthesis via de novo pathway; L-homoserine from L-aspartate: step 2/3. It functions in the pathway amino-acid biosynthesis; L-threonine biosynthesis; L-threonine from L-aspartate: step 2/5. Its function is as follows. Catalyzes the NADPH-dependent formation of L-aspartate-semialdehyde (L-ASA) by the reductive dephosphorylation of L-aspartyl-4-phosphate. The polypeptide is Aspartate-semialdehyde dehydrogenase (Buchnera aphidicola subsp. Acyrthosiphon pisum (strain APS) (Acyrthosiphon pisum symbiotic bacterium)).